The primary structure comprises 205 residues: Enhancer of split mgamma protein (205 aa).

The 58-residue stretch at 15-72 (YRKVMKPMLERKRRARINKCLDELKDLMVATLESEGEHVTRLEKADILELTVTHLQKM) folds into the bHLH domain. The Orange domain maps to 93–126 (FRSGYIHAVNEVSRSLSQLPGMNVSLGTQLMTHL). Residues 202 to 205 (WRPW) carry the WRPW motif motif.

In terms of assembly, homodimer. Heterodimer with dpn. Might form higher-order oligomers. Transcription repression requires formation of a complex with a corepressor protein (Groucho). Expressed in sensory organ precursors in the wing, leg and eye imaginal disk.

It localises to the nucleus. In terms of biological role, transcriptional repressor of genes that require a bHLH protein for their transcription. May serve as a transcriptional regulator of the Achaete-scute complex (AS-C) genes. Contributes to the neural-epidermal lineage decision during early neurogenesis. Part of the Notch signaling pathway, plays a role in neuroblasts proliferation in embryos and larvae. In the larval brain, together with other self-renewal transcriptional repressors such as klu and dpn, required for type II neuroblast self-renewal and for maintaining erm in an inactive state in intermediate neural progenitors (INP) derived from type II neuroblasts. This chain is Enhancer of split mgamma protein, found in Drosophila melanogaster (Fruit fly).